A 61-amino-acid polypeptide reads, in one-letter code: Japonicin-1CDYa (61 aa).

The first 22 residues, 1–22, serve as a signal peptide directing secretion; the sequence is MFTLKKSLLLLFFLGVINVSLC. Residues 23–45 constitute a propeptide that is removed on maturation; it reads EEERDADEEERRDDPEERDVEVE. A disulfide bridge links Cys55 with Cys61.

It belongs to the frog skin active peptide (FSAP) family. Brevinin subfamily. Expressed by the skin glands.

It is found in the secreted. In terms of biological role, antimicrobial peptide. Has low activity against the Gram-positive bacterium S.aureus (MIC&gt;100 uM) and the Gram-negative bacterium E.coli (MIC=25 uM). Lacks hemolytic activity against human erythrocytes. This is Japonicin-1CDYa from Rana dybowskii (Dybovsky's frog).